A 448-amino-acid polypeptide reads, in one-letter code: MMMETRDPAIKLFGMKIPFPSVFESAVTVEDDEEDDWSGGDDKSPEKVTPELSDKNNNNCNDNSFNNSKPETLDKEEATSTDQIESSDTPEDNQQTTPDGKTLKKPTKILPCPRCKSMETKFCYYNNYNINQPRHFCKACQRYWTAGGTMRNVPVGAGRRKNKSSSSHYRHITISEALEAARLDPGLQANTRVLSFGLEAQQQHVAAPMTPVMKLQEDQKVSNGARNRFHGLADQRLVARVENGDDCSSGSSVTTSNNHSVDESRAQSGSVVEAQMNNNNNNNMNGYACIPGVPWPYTWNPAMPPPGFYPPPGYPMPFYPYWTIPMLPPHQSSSPISQKCSNTNSPTLGKHPRDEGSSKKDNETERKQKAGCVLVPKTLRIDDPNEAAKSSIWTTLGIKNEAMCKAGGMFKGFDHKTKMYNNDKAENSPVLSANPAALSRSHNFHEQI.

The interval 26–108 is disordered; it reads AVTVEDDEED…DGKTLKKPTK (83 aa). Residues 29–39 show a composition bias toward acidic residues; it reads VEDDEEDDWSG. The segment covering 40-54 has biased composition (basic and acidic residues); the sequence is GDDKSPEKVTPELSD. The span at 55-69 shows a compositional bias: low complexity; the sequence is KNNNNCNDNSFNNSK. Polar residues predominate over residues 80–99; it reads STDQIESSDTPEDNQQTTPD. The Dof-type zinc finger occupies 110-164; sequence LPCPRCKSMETKFCYYNNYNINQPRHFCKACQRYWTAGGTMRNVPVGAGRRKNKS. Residues Cys-112, Cys-115, Cys-137, and Cys-140 each contribute to the Zn(2+) site. Disordered stretches follow at residues 243–269 and 332–370; these read NGDDCSSGSSVTTSNNHSVDESRAQSG and SSSPISQKCSNTNSPTLGKHPRDEGSSKKDNETERKQKA. 2 stretches are compositionally biased toward polar residues: residues 246–259 and 332–347; these read DCSSGSSVTTSNNH and SSSPISQKCSNTNSPT. The segment covering 351–368 has biased composition (basic and acidic residues); that stretch reads HPRDEGSSKKDNETERKQ.

Interacts with ADO2 (via kelch repeats) and ADO3 (via kelch repeats). In terms of tissue distribution, expressed in the vasculature of cotyledons and hypocotyls, leaves and roots.

The protein resides in the nucleus. Transcription factor that binds specifically to a 5'-AA[AG]G-3' consensus core sequence. Regulates a photoperiodic flowering response. Transcriptional repressor of 'CONSTANS' expression. The chain is Cyclic dof factor 3 (CDF3) from Arabidopsis thaliana (Mouse-ear cress).